Consider the following 166-residue polypeptide: Regulator of ribonuclease activity A (166 aa).

This sequence belongs to the RraA family. In terms of assembly, homotrimer. Binds to both RNA-binding sites in the C-terminal region of Rne and to RhlB.

The protein resides in the cytoplasm. Functionally, globally modulates RNA abundance by binding to RNase E (Rne) and regulating its endonucleolytic activity. Can modulate Rne action in a substrate-dependent manner by altering the composition of the degradosome. Modulates RNA-binding and helicase activities of the degradosome. The polypeptide is Regulator of ribonuclease activity A (Glaesserella parasuis serovar 5 (strain SH0165) (Haemophilus parasuis)).